A 121-amino-acid polypeptide reads, in one-letter code: Holo-[acyl-carrier-protein] synthase (121 aa).

Residues Asp-8 and Glu-58 each coordinate Mg(2+).

It belongs to the P-Pant transferase superfamily. AcpS family. Mg(2+) is required as a cofactor.

The protein resides in the cytoplasm. It carries out the reaction apo-[ACP] + CoA = holo-[ACP] + adenosine 3',5'-bisphosphate + H(+). Its function is as follows. Transfers the 4'-phosphopantetheine moiety from coenzyme A to a Ser of acyl-carrier-protein. This Bacillus pumilus (strain SAFR-032) protein is Holo-[acyl-carrier-protein] synthase.